Consider the following 455-residue polypeptide: Kynureninase (455 aa).

Residues leucine 94, threonine 95, 122–125 (FPSD), aspartate 208, histidine 211, and tyrosine 233 each bind pyridoxal 5'-phosphate. Lysine 234 is modified (N6-(pyridoxal phosphate)lysine). Pyridoxal 5'-phosphate is bound by residues tryptophan 275 and asparagine 303.

Belongs to the kynureninase family. Homodimer. Requires pyridoxal 5'-phosphate as cofactor.

It is found in the cytoplasm. The enzyme catalyses L-kynurenine + H2O = anthranilate + L-alanine + H(+). It catalyses the reaction 3-hydroxy-L-kynurenine + H2O = 3-hydroxyanthranilate + L-alanine + H(+). It participates in amino-acid degradation; L-kynurenine degradation; L-alanine and anthranilate from L-kynurenine: step 1/1. It functions in the pathway cofactor biosynthesis; NAD(+) biosynthesis; quinolinate from L-kynurenine: step 2/3. Catalyzes the cleavage of L-kynurenine (L-Kyn) and L-3-hydroxykynurenine (L-3OHKyn) into anthranilic acid (AA) and 3-hydroxyanthranilic acid (3-OHAA), respectively. This chain is Kynureninase, found in Vanderwaltozyma polyspora (strain ATCC 22028 / DSM 70294 / BCRC 21397 / CBS 2163 / NBRC 10782 / NRRL Y-8283 / UCD 57-17) (Kluyveromyces polysporus).